A 170-amino-acid chain; its full sequence is Flavodoxin (170 aa).

Residues 5-165 form the Flavodoxin-like domain; that stretch reads IGLFYGTQTG…RIKSWVAQLK (161 aa).

The protein belongs to the flavodoxin family. Requires FMN as cofactor.

Functionally, low-potential electron donor to a number of redox enzymes. The protein is Flavodoxin (isiB) of Nostoc sp. (strain PCC 7120 / SAG 25.82 / UTEX 2576).